The primary structure comprises 129 residues: Lysozyme C (129 aa).

The 129-residue stretch at 1–129 folds into the C-type lysozyme domain; that stretch reads KVYGRCELAA…VHAWIRGCRL (129 aa). Intrachain disulfides connect Cys6/Cys127, Cys30/Cys115, Cys64/Cys80, and Cys76/Cys94. Active-site residues include Glu35 and Asp52.

The protein belongs to the glycosyl hydrolase 22 family. Monomer.

The protein localises to the secreted. It carries out the reaction Hydrolysis of (1-&gt;4)-beta-linkages between N-acetylmuramic acid and N-acetyl-D-glucosamine residues in a peptidoglycan and between N-acetyl-D-glucosamine residues in chitodextrins.. Its function is as follows. Lysozymes have primarily a bacteriolytic function; those in tissues and body fluids are associated with the monocyte-macrophage system and enhance the activity of immunoagents. In Pavo cristatus (Indian peafowl), this protein is Lysozyme C (LYZ).